We begin with the raw amino-acid sequence, 332 residues long: Cytoplasmic phosphatidylinositol transfer protein 1 (332 aa).

Residues serine 119, serine 122, serine 270, and serine 274 each carry the phosphoserine modification. The span at 272-281 (PSSAPSTPLS) shows a compositional bias: low complexity. A disordered region spans residues 272–332 (PSSAPSTPLS…SEKPCRPKSE (61 aa)). Phosphothreonine is present on threonine 278.

Belongs to the PtdIns transfer protein family. PI transfer class IIB subfamily. In terms of tissue distribution, widely expressed in brain, with expression in the gray matters of pre- and postnatal brains. As to expression, weakly expressed in brain and is rather confined to the embryonic stage.

It is found in the cytoplasm. It localises to the nucleus. The catalysed reaction is a 1,2-diacyl-sn-glycero-3-phospho-(1D-myo-inositol)(in) = a 1,2-diacyl-sn-glycero-3-phospho-(1D-myo-inositol)(out). It catalyses the reaction a 1,2-diacyl-sn-glycero-3-phosphate(in) = a 1,2-diacyl-sn-glycero-3-phosphate(out). Functionally, catalyzes the transfer of phosphatidylinositol (PI) and phosphatidic acid (PA) between membranes. Binds PA derived from the phospholipase D signaling pathway and among the cellular PA species, preferably binds to the C16:0/16:1 and C16:1/18:1 PA species. In terms of biological role, specifically binds to phosphatidylinositol but not to other phospholipids and may play a role in the phosphoinositide-mediated signaling in the neural development. In Mus musculus (Mouse), this protein is Cytoplasmic phosphatidylinositol transfer protein 1 (Pitpnc1).